A 156-amino-acid polypeptide reads, in one-letter code: ATP synthase subunit b (156 aa).

A helical membrane pass occupies residues 5–27; that stretch reads ITLIGQMITFAIFIGFTMKFVWP.

The protein belongs to the ATPase B chain family. As to quaternary structure, F-type ATPases have 2 components, F(1) - the catalytic core - and F(0) - the membrane proton channel. F(1) has five subunits: alpha(3), beta(3), gamma(1), delta(1), epsilon(1). F(0) has three main subunits: a(1), b(2) and c(10-14). The alpha and beta chains form an alternating ring which encloses part of the gamma chain. F(1) is attached to F(0) by a central stalk formed by the gamma and epsilon chains, while a peripheral stalk is formed by the delta and b chains.

It localises to the cell inner membrane. Functionally, f(1)F(0) ATP synthase produces ATP from ADP in the presence of a proton or sodium gradient. F-type ATPases consist of two structural domains, F(1) containing the extramembraneous catalytic core and F(0) containing the membrane proton channel, linked together by a central stalk and a peripheral stalk. During catalysis, ATP synthesis in the catalytic domain of F(1) is coupled via a rotary mechanism of the central stalk subunits to proton translocation. Its function is as follows. Component of the F(0) channel, it forms part of the peripheral stalk, linking F(1) to F(0). The protein is ATP synthase subunit b of Francisella tularensis subsp. holarctica (strain OSU18).